Here is a 352-residue protein sequence, read N- to C-terminus: Minor capsid protein VP2 (352 aa).

G2 is lipidated: N-myristoyl glycine; by host. The segment at S273–P308 is D1. Residues I290–L310 traverse the membrane as a helical segment. The segment at A312–S352 is disordered. A DNA-binding region spans residues Y313 to S352. Positions A316–M324 match the Nuclear localization signal motif. The span at S342 to S352 shows a compositional bias: basic residues.

The protein belongs to the polyomaviruses capsid protein VP2 family. As to quaternary structure, forms homooligomers, and heterooligomers with VP3 in the endoplasmic reticulum membrane. Interacts (via D1 domain) with VP1. In terms of assembly, interacts (via D1 domain) with VP1.

It is found in the virion. It localises to the host nucleus. The protein resides in the host endoplasmic reticulum. The protein localises to the host endoplasmic reticulum membrane. Its function is as follows. Structural protein that resides within the core of the capsid surrounded by 72 VP1 pentamers. Participates in host cell receptor binding together with VP1. Following virus endocytosis and trafficking to the endoplasmic reticulum, VP2 and VP3 form oligomers and integrate into the endoplasmic reticulum membrane. Heterooligomer VP2-VP3 may create a viroporin for transporting the viral genome across the endoplasmic reticulum membrane to the cytoplasm. Nuclear entry of the viral DNA involves the selective exposure and importin recognition of VP2 or VP3 nuclear localization signal (shared C-terminus). Plays a role in virion assembly within the nucleus in particular through a DNA-binding domain located in the C-terminal region. An N-terminal myristoylation suggests a scaffold function for virion assembly. Functionally, structural protein that resides within the core of the capsid surrounded by 72 VP1 pentamers. Following virus endocytosis and trafficking to the endoplasmic reticulum, VP2 and VP3 form oligomers and integrate into the endoplasmic reticulum membrane. Heterooligomer VP2-VP3 may create a viroporin for transporting the viral genome across the endoplasmic reticulum membrane to the cytoplasm. Nuclear entry of the viral DNA involves the selective exposure and importin recognition of VP2 or VP3 nuclear localization signal (shared C-terminus). Plays a role in virion assembly within the nucleus. May participate in host cell lysis when associated with VP4. In terms of biological role, viroporin inducing perforation of cellular membranes to trigger virus progeny release. Forms pores of 3 nm inner diameter. VP4 is expressed about 24 hours after the late structural proteins and is not incorporated into the mature virion. The sequence is that of Minor capsid protein VP2 from Simian virus 12 (strain wt100) (SV-12).